A 394-amino-acid polypeptide reads, in one-letter code: S-adenosylmethionine synthase (394 aa).

His18 lines the ATP pocket. Position 20 (Asp20) interacts with Mg(2+). Glu46 serves as a coordination point for K(+). L-methionine contacts are provided by Glu59 and Gln104. Positions 104–114 (QSPDIAQGVDA) are flexible loop. Residues 174 to 176 (DCK), 240 to 241 (KF), Asp249, 255 to 256 (RK), Ala272, and Lys276 contribute to the ATP site. Asp249 contacts L-methionine. Lys280 contributes to the L-methionine binding site.

The protein belongs to the AdoMet synthase family. In terms of assembly, homotetramer; dimer of dimers. It depends on Mg(2+) as a cofactor. Requires K(+) as cofactor.

The protein localises to the cytoplasm. It carries out the reaction L-methionine + ATP + H2O = S-adenosyl-L-methionine + phosphate + diphosphate. The protein operates within amino-acid biosynthesis; S-adenosyl-L-methionine biosynthesis; S-adenosyl-L-methionine from L-methionine: step 1/1. Catalyzes the formation of S-adenosylmethionine (AdoMet) from methionine and ATP. The overall synthetic reaction is composed of two sequential steps, AdoMet formation and the subsequent tripolyphosphate hydrolysis which occurs prior to release of AdoMet from the enzyme. This is S-adenosylmethionine synthase from Akkermansia muciniphila (strain ATCC BAA-835 / DSM 22959 / JCM 33894 / BCRC 81048 / CCUG 64013 / CIP 107961 / Muc).